Consider the following 647-residue polypeptide: MEPAAGFLSPRPFPRAAAPSSPPAGPGPPASASPRSEPGVLAGPQTPDASRLITDPRSGRTYIKGRLLGKGGFARCYEATDTETSIAYAVKVIPQSRVAKPHQREKIINEIELHRDLQHRHIVRFSHHFEDADNIYIFLELCSRKSLAHIWKARHTLLEPEVRYYLRQILSGLKYLHQRGILHRDLKLGNFFITDNMELKVGDFGLAARLEPPEQRKKTICGTPNYVAPEVLLRQGHGPEADVWSLGCVMYTLLCGSPPFETADLKETYRCIKQVHYTLPASLSLPARQLLAAILRASPRDRPSIEQILRHDFFTKGYTPDRLPVSSCVTVPDLTPPNPARSLFAKVTKSLFGRRKSKNKNHSEEQDNVSCLVSGLMRTSIGHPDVRPEAPAASALAPVSLVETAAEDSSPRGTLASSGDGFEEGLTVTTVVESALCALRNCVAFMPPAEQNPAPLAQPEPLVWVSKWVDYSNKFGFGYQLSSRRVAVLFNDGTHMALSANRKTVHYNPTSTKHFSFSVGSVPRALQPQLGILRYFASYMEQHLMKGGDLPSVEEVEVPAPPLLLQWVKTDQALLMLFSDGTVQVNFYGDHTKLILSGWEPLLVTFVARNRSACTYLASHLRQLGCSPDLRQRLRYALRLLRDRSPA.

The tract at residues 1–56 (MEPAAGFLSPRPFPRAAAPSSPPAGPGPPASASPRSEPGVLAGPQTPDASRLITDP) is disordered. The span at 20-31 (SSPPAGPGPPAS) shows a compositional bias: pro residues. The 253-residue stretch at 62 to 314 (YIKGRLLGKG…IEQILRHDFF (253 aa)) folds into the Protein kinase domain. ATP is bound by residues 68–76 (LGKGGFARC) and K91. The Proton acceptor role is filled by D185. POLO box domains lie at 464–542 (WVSK…YMEQ) and 563–646 (LLLQ…DRSP).

It belongs to the protein kinase superfamily. Ser/Thr protein kinase family. CDC5/Polo subfamily. Interacts with GOLGB1. Interacts (via the POLO-box domain) with CIB1; leading to inhibit PLK3 kinase activity. Post-translationally, phosphorylated in an ATM-dependent manner following DNA damage. Phosphorylated as cells enter mitosis and dephosphorylated as cells exit mitosis. Constitutively expressed in post-mitotic neurons.

It is found in the cell projection. The protein resides in the dendrite. Its subcellular location is the cytoplasm. It localises to the nucleus. The protein localises to the nucleolus. It is found in the golgi apparatus. The protein resides in the cytoskeleton. Its subcellular location is the microtubule organizing center. It localises to the centrosome. The enzyme catalyses L-seryl-[protein] + ATP = O-phospho-L-seryl-[protein] + ADP + H(+). The catalysed reaction is L-threonyl-[protein] + ATP = O-phospho-L-threonyl-[protein] + ADP + H(+). In terms of biological role, serine/threonine-protein kinase involved in cell cycle regulation, response to stress and Golgi disassembly. Polo-like kinases act by binding and phosphorylating proteins that are already phosphorylated on a specific motif recognized by the POLO box domains. Phosphorylates ATF2, BCL2L1, CDC25A, CDC25C, CHEK2, HIF1A, JUN, p53/TP53, p73/TP73, PTEN, TOP2A and VRK1. Involved in cell cycle regulation: required for entry into S phase and cytokinesis. Phosphorylates BCL2L1, leading to regulate the G2 checkpoint and progression to cytokinesis during mitosis. Plays a key role in response to stress: rapidly activated upon stress stimulation, such as ionizing radiation, reactive oxygen species (ROS), hyperosmotic stress, UV irradiation and hypoxia. Involved in DNA damage response and G1/S transition checkpoint by phosphorylating CDC25A, p53/TP53 and p73/TP73. Phosphorylates p53/TP53 in response to reactive oxygen species (ROS), thereby promoting p53/TP53-mediated apoptosis. Phosphorylates CHEK2 in response to DNA damage, promoting the G2/M transition checkpoint. Phosphorylates the transcription factor p73/TP73 in response to DNA damage, leading to inhibit p73/TP73-mediated transcriptional activation and pro-apoptotic functions. Phosphorylates HIF1A and JUN is response to hypoxia. Phosphorylates ATF2 following hyperosmotic stress in corneal epithelium. Also involved in Golgi disassembly during the cell cycle: part of a MEK1/MAP2K1-dependent pathway that induces Golgi fragmentation during mitosis by mediating phosphorylation of VRK1. May participate in endomitotic cell cycle, a form of mitosis in which both karyokinesis and cytokinesis are interrupted and is a hallmark of megakaryocyte differentiation, via its interaction with CIB1. In Rattus norvegicus (Rat), this protein is Serine/threonine-protein kinase PLK3 (Plk3).